The sequence spans 1221 residues: DNA-directed RNA polymerase subunit beta' (1221 aa).

Cysteine 60, cysteine 62, cysteine 75, and cysteine 78 together coordinate Zn(2+). 3 residues coordinate Mg(2+): aspartate 449, aspartate 451, and aspartate 453. Residues cysteine 820, cysteine 894, cysteine 901, and cysteine 904 each contribute to the Zn(2+) site.

It belongs to the RNA polymerase beta' chain family. The RNAP catalytic core consists of 2 alpha, 1 beta, 1 beta' and 1 omega subunit. When a sigma factor is associated with the core the holoenzyme is formed, which can initiate transcription. Requires Mg(2+) as cofactor. The cofactor is Zn(2+).

The enzyme catalyses RNA(n) + a ribonucleoside 5'-triphosphate = RNA(n+1) + diphosphate. In terms of biological role, DNA-dependent RNA polymerase catalyzes the transcription of DNA into RNA using the four ribonucleoside triphosphates as substrates. In Ligilactobacillus salivarius (strain UCC118) (Lactobacillus salivarius), this protein is DNA-directed RNA polymerase subunit beta'.